Reading from the N-terminus, the 269-residue chain is Phosphatidylglycerol--prolipoprotein diacylglyceryl transferase (269 aa).

Helical transmembrane passes span 10 to 30, 56 to 76, 91 to 111, 126 to 146, 172 to 192, 200 to 220, and 237 to 257; these read IAVS…LIGF, AIFY…ILFY, IWEG…AMFF, FLAP…FIGG, PSQL…LWFF, YCVS…VEFV, and EGQL…MAGL. Residue R139 coordinates a 1,2-diacyl-sn-glycero-3-phospho-(1'-sn-glycerol).

Belongs to the Lgt family.

The protein localises to the cell inner membrane. It catalyses the reaction L-cysteinyl-[prolipoprotein] + a 1,2-diacyl-sn-glycero-3-phospho-(1'-sn-glycerol) = an S-1,2-diacyl-sn-glyceryl-L-cysteinyl-[prolipoprotein] + sn-glycerol 1-phosphate + H(+). The protein operates within protein modification; lipoprotein biosynthesis (diacylglyceryl transfer). In terms of biological role, catalyzes the transfer of the diacylglyceryl group from phosphatidylglycerol to the sulfhydryl group of the N-terminal cysteine of a prolipoprotein, the first step in the formation of mature lipoproteins. The polypeptide is Phosphatidylglycerol--prolipoprotein diacylglyceryl transferase (Marinomonas sp. (strain MWYL1)).